A 545-amino-acid polypeptide reads, in one-letter code: MVAEAGSMPAASSVKKPFGLRSKMGKWCRHCFAWCRGSGKSNVGTSGDHDDSAMKTLRSKMGKWCCHCFPWCRGSGKSNVGTSGDHDDSAMKTLRSKMGKWCCHCFPCCRGSGKSNVGTSGDHDDSAMKTLRSKMGKWCCHCFPCCRGSGKNKVGPWGDYDDSAFMEPRYHVRREDLDKLHRAAWWGKVPRKDLIVMLKDTDMNKKDKQKRTALHLASANGNSEVVKLLLDRRCQLNILDNKKRTALTKAVQCQEDECALMLLEHGTDPNIPDEYGNTALHYAIYNEDKLMAKALLLYGADIESKNKHGLTPLLLGVHEQKQQVVKFLIKKKANLNALDRYGRTALILAVCCGSASIVSLLLEQNIDVSSQDLSGQTAREYAVSSRHNVICQLLSDYKEKQILKVSSENSNPEQDLKLTSEEESQRLKGSENSQPEEMSQEPEINKGGDRKVEEEMKKHGSTHMGFPENLTNGATADNGDDGLIPPRKSRTPESQQFPDTENEQYHSDEQNDTQKQLSEEQNTGILQDEILIHEEKQIEVAENEF.

7 ANK repeats span residues 180–208, 209–238, 242–271, 275–304, 308–337, 341–370, and 374–404; these read LHRAAWWGKVPRKDLIVMLKDTDMNKKDK, QKRTALHLASANGNSEVVKLLLDRRCQLNI, KKRTALTKAVQCQEDECALMLLEHGTDPNI, YGNTALHYAIYNEDKLMAKALLLYGADIES, HGLTPLLLGVHEQKQQVVKFLIKKKANLNA, YGRTALILAVCCGSASIVSLLLEQNIDVSS, and SGQTAREYAVSSRHNVICQLLSDYKEKQILK. Residues 406–524 are disordered; it reads SSENSNPEQD…KQLSEEQNTG (119 aa). 2 stretches are compositionally biased toward basic and acidic residues: residues 414–429 and 443–458; these read QDLKLTSEEESQRLKG and EINKGGDRKVEEEMKK. Polar residues predominate over residues 513–524; sequence TQKQLSEEQNTG.

The protein belongs to the POTE family.

This chain is POTE ankyrin domain family member H (POTEH), found in Homo sapiens (Human).